The sequence spans 247 residues: Suppressor of silencing P0 (247 aa).

Positions 76 to 95 (LPRHLHYECLEWGLLCGTHP) constitute an F-box-like domain.

This sequence belongs to the polerovirus P0 protein family.

Suppressor of RNA-mediated gene silencing, also known as post-transcriptional gene silencing (PTGS), a mechanism of plant viral defense that limits the accumulation of viral RNAs. The P0 protein suppresses local PTGS using its F-box-like domain to mediate destabilization and degradation of the AGO1 protein, although not via an interaction with host SKP1A. Participates, together with the proteins P1 and P7, in the inhibition of the induction of aphid-induced host phytohormones. This could play a role in the attraction to the infected plants by aphids. The sequence is that of Suppressor of silencing P0 from Potato leafroll virus (strain Potato/Netherlands/Wageningen/1989) (PLrV).